The primary structure comprises 474 residues: Homocitrate synthase, mitochondrial (474 aa).

The region spanning F67 to K320 is the Pyruvate carboxyltransferase domain. Position 75 (R75) interacts with 2-oxoglutarate. E76 contacts Mg(2+). 2-oxoglutarate contacts are provided by H135, R195, and T229. Residues H256 and H258 each contribute to the Mg(2+) site. H353 serves as the catalytic Proton acceptor.

The protein belongs to the alpha-IPM synthase/homocitrate synthase family. Homocitrate synthase LYS20/LYS21 subfamily. It depends on Mg(2+) as a cofactor. Mn(2+) serves as cofactor.

The protein localises to the mitochondrion. It catalyses the reaction acetyl-CoA + 2-oxoglutarate + H2O = (2R)-homocitrate + CoA + H(+). Its pathway is amino-acid biosynthesis; L-lysine biosynthesis via AAA pathway; L-alpha-aminoadipate from 2-oxoglutarate: step 1/5. In terms of biological role, catalyzes the aldol-type condensation of 2-oxoglutarate with acetyl-CoA to yield homocitrate. Carries out the first step of the alpha-aminoadipate (AAA) lysine biosynthesis pathway. This Penicillium rubens (strain ATCC 28089 / DSM 1075 / NRRL 1951 / Wisconsin 54-1255) (Penicillium chrysogenum) protein is Homocitrate synthase, mitochondrial (lys1).